Reading from the N-terminus, the 290-residue chain is MQDPRLLMGKPVRERILEEVRSVTEKVDRIGKLVSISIGDVPEVAVYVRNQARAASTAGLPFDQEFWGADVTQDECKAMIQKMNDDPEVLGIILQRPVPDHINVRSLQSAIHPLKDVEGMNPASIGNIVYNDVAMAPCTAAAAVELIRETGLKLEGLEVVMVGHSEIVGKPAAMMLMAEGATVTVCHHLTRSVAMHSRRADVIVVAVGKAHLIGADMVKPGAAVIDIGINQITEADGNTRIVGDVDTDAVKEIAGWVTPVPGGVGPVTVAILMRNAVRAHERQKAAGWYA.

NADP(+) contacts are provided by residues 163–165 and Ile229; that span reads GHS.

The protein belongs to the tetrahydrofolate dehydrogenase/cyclohydrolase family. As to quaternary structure, homodimer.

The catalysed reaction is (6R)-5,10-methylene-5,6,7,8-tetrahydrofolate + NADP(+) = (6R)-5,10-methenyltetrahydrofolate + NADPH. The enzyme catalyses (6R)-5,10-methenyltetrahydrofolate + H2O = (6R)-10-formyltetrahydrofolate + H(+). Its pathway is one-carbon metabolism; tetrahydrofolate interconversion. In terms of biological role, catalyzes the oxidation of 5,10-methylenetetrahydrofolate to 5,10-methenyltetrahydrofolate and then the hydrolysis of 5,10-methenyltetrahydrofolate to 10-formyltetrahydrofolate. In Roseobacter denitrificans (strain ATCC 33942 / OCh 114) (Erythrobacter sp. (strain OCh 114)), this protein is Bifunctional protein FolD 3.